A 448-amino-acid chain; its full sequence is uncharacterized protein (448 aa).

The uDENN domain maps to glutamine 4–leucine 155. Residues leucine 183–phenylalanine 326 enclose the cDENN domain. The 101-residue stretch at glycine 328–arginine 428 folds into the dDENN domain. The chain crosses the membrane as a helical span at residues phenylalanine 425–leucine 447.

It is found in the golgi apparatus membrane. The protein resides in the endoplasmic reticulum membrane. This is an uncharacterized protein from Schizosaccharomyces pombe (strain 972 / ATCC 24843) (Fission yeast).